We begin with the raw amino-acid sequence, 101 residues long: Putative defensin-like protein 86 (101 aa).

The signal sequence occupies residues methionine 1–glycine 27. 4 disulfide bridges follow: cysteine 35–cysteine 71, cysteine 39–cysteine 59, cysteine 45–cysteine 69, and cysteine 49–cysteine 70.

It belongs to the DEFL family.

The protein resides in the secreted. The sequence is that of Putative defensin-like protein 86 (LCR82) from Arabidopsis thaliana (Mouse-ear cress).